Consider the following 752-residue polypeptide: Phosphoribosylformylglycinamidine synthase subunit PurL (752 aa).

Residue His-58 is part of the active site. Tyr-61 and Lys-103 together coordinate ATP. Mg(2+) is bound at residue Glu-105. Residues 106 to 109 and Arg-128 contribute to the substrate site; that span reads SHNH. His-107 (proton acceptor) is an active-site residue. Residue Asp-129 coordinates Mg(2+). Gln-253 is a substrate binding site. Asp-281 lines the Mg(2+) pocket. 325–327 serves as a coordination point for substrate; that stretch reads ESQ. Positions 513 and 550 each coordinate ATP. A Mg(2+)-binding site is contributed by Asn-551. A substrate-binding site is contributed by Ser-553.

Belongs to the FGAMS family. In terms of assembly, monomer. Part of the FGAM synthase complex composed of 1 PurL, 1 PurQ and 2 PurS subunits.

The protein localises to the cytoplasm. The enzyme catalyses N(2)-formyl-N(1)-(5-phospho-beta-D-ribosyl)glycinamide + L-glutamine + ATP + H2O = 2-formamido-N(1)-(5-O-phospho-beta-D-ribosyl)acetamidine + L-glutamate + ADP + phosphate + H(+). It functions in the pathway purine metabolism; IMP biosynthesis via de novo pathway; 5-amino-1-(5-phospho-D-ribosyl)imidazole from N(2)-formyl-N(1)-(5-phospho-D-ribosyl)glycinamide: step 1/2. Functionally, part of the phosphoribosylformylglycinamidine synthase complex involved in the purines biosynthetic pathway. Catalyzes the ATP-dependent conversion of formylglycinamide ribonucleotide (FGAR) and glutamine to yield formylglycinamidine ribonucleotide (FGAM) and glutamate. The FGAM synthase complex is composed of three subunits. PurQ produces an ammonia molecule by converting glutamine to glutamate. PurL transfers the ammonia molecule to FGAR to form FGAM in an ATP-dependent manner. PurS interacts with PurQ and PurL and is thought to assist in the transfer of the ammonia molecule from PurQ to PurL. This is Phosphoribosylformylglycinamidine synthase subunit PurL from Streptomyces avermitilis (strain ATCC 31267 / DSM 46492 / JCM 5070 / NBRC 14893 / NCIMB 12804 / NRRL 8165 / MA-4680).